A 761-amino-acid polypeptide reads, in one-letter code: Subtilisin-like protease SBT3.15 (761 aa).

An N-terminal signal peptide occupies residues 1–21 (MENSFLSSKLVFLLAIALVLF). Positions 22-120 (LNTELSFLTA…VIPNRILKLK (99 aa)) are cleaved as a propeptide — activation peptide. The region spanning 41–119 (VYIVYLGQRE…HVIPNRILKL (79 aa)) is the Inhibitor I9 domain. Positions 134-613 (PTSFSSSSSA…GGLVNPEKAA (480 aa)) constitute a Peptidase S8 domain. Residue Asn151 is glycosylated (N-linked (GlcNAc...) asparagine). The active-site Charge relay system is the Asp164. N-linked (GlcNAc...) asparagine glycosylation occurs at Asn197. His241 (charge relay system) is an active-site residue. 2 N-linked (GlcNAc...) asparagine glycosylation sites follow: Asn256 and Asn384. Catalysis depends on Ser544, which acts as the Charge relay system. N-linked (GlcNAc...) asparagine glycosylation occurs at Asn636.

It belongs to the peptidase S8 family.

The protein resides in the secreted. This Arabidopsis thaliana (Mouse-ear cress) protein is Subtilisin-like protease SBT3.15.